We begin with the raw amino-acid sequence, 393 residues long: tRNA(Met) cytidine acetate ligase (393 aa).

Glycine 81, asparagine 142, and arginine 167 together coordinate ATP.

Belongs to the TmcAL family.

The protein localises to the cytoplasm. The enzyme catalyses cytidine(34) in elongator tRNA(Met) + acetate + ATP = N(4)-acetylcytidine(34) in elongator tRNA(Met) + AMP + diphosphate. Catalyzes the formation of N(4)-acetylcytidine (ac(4)C) at the wobble position of elongator tRNA(Met), using acetate and ATP as substrates. First activates an acetate ion to form acetyladenylate (Ac-AMP) and then transfers the acetyl group to tRNA to form ac(4)C34. This is tRNA(Met) cytidine acetate ligase from Bacillus cereus (strain ZK / E33L).